Consider the following 244-residue polypeptide: Carboxy-S-adenosyl-L-methionine synthase (244 aa).

S-adenosyl-L-methionine-binding positions include Tyr-40, 65-67 (GCS), 90-91 (DN), Asn-134, and Arg-201.

The protein belongs to the class I-like SAM-binding methyltransferase superfamily. Cx-SAM synthase family. Homodimer.

It catalyses the reaction prephenate + S-adenosyl-L-methionine = carboxy-S-adenosyl-L-methionine + 3-phenylpyruvate + H2O. Functionally, catalyzes the conversion of S-adenosyl-L-methionine (SAM) to carboxy-S-adenosyl-L-methionine (Cx-SAM). This Citrifermentans bemidjiense (strain ATCC BAA-1014 / DSM 16622 / JCM 12645 / Bem) (Geobacter bemidjiensis) protein is Carboxy-S-adenosyl-L-methionine synthase.